The following is a 428-amino-acid chain: Serine hydroxymethyltransferase (428 aa).

Residues Leu-117 and 121–123 (GHL) contribute to the (6S)-5,6,7,8-tetrahydrofolate site. Lys-226 carries the N6-(pyridoxal phosphate)lysine modification.

It belongs to the SHMT family. As to quaternary structure, homodimer. Requires pyridoxal 5'-phosphate as cofactor.

It localises to the cytoplasm. It carries out the reaction (6R)-5,10-methylene-5,6,7,8-tetrahydrofolate + glycine + H2O = (6S)-5,6,7,8-tetrahydrofolate + L-serine. It functions in the pathway one-carbon metabolism; tetrahydrofolate interconversion. It participates in amino-acid biosynthesis; glycine biosynthesis; glycine from L-serine: step 1/1. Its function is as follows. Catalyzes the reversible interconversion of serine and glycine with tetrahydrofolate (THF) serving as the one-carbon carrier. This reaction serves as the major source of one-carbon groups required for the biosynthesis of purines, thymidylate, methionine, and other important biomolecules. Also exhibits THF-independent aldolase activity toward beta-hydroxyamino acids, producing glycine and aldehydes, via a retro-aldol mechanism. The chain is Serine hydroxymethyltransferase from Aquifex aeolicus (strain VF5).